The sequence spans 202 residues: IMP cyclohydrolase (202 aa).

Residues 29–52 (VQRDGTVTVEPTPDAPETDNPYIS) are disordered.

This sequence belongs to the archaeal IMP cyclohydrolase family.

The enzyme catalyses IMP + H2O = 5-formamido-1-(5-phospho-D-ribosyl)imidazole-4-carboxamide. Its pathway is purine metabolism; IMP biosynthesis via de novo pathway; IMP from 5-formamido-1-(5-phospho-D-ribosyl)imidazole-4-carboxamide: step 1/1. Its function is as follows. Catalyzes the cyclization of 5-formylamidoimidazole-4-carboxamide ribonucleotide to IMP. The sequence is that of IMP cyclohydrolase from Haloarcula marismortui (strain ATCC 43049 / DSM 3752 / JCM 8966 / VKM B-1809) (Halobacterium marismortui).